The primary structure comprises 187 residues: Small monomeric GTPase RhbA (187 aa).

Positions 17, 18, 19, 20, 21, 22, 33, and 34 each coordinate GDP. Serine 17 serves as a coordination point for GTP. Residues glycine 19, lysine 20, serine 21, serine 22, and valine 33 each coordinate GTP. Serine 21 contributes to the Mg(2+) binding site. Tyrosine 36, threonine 39, asparagine 120, aspartate 123, and alanine 152 together coordinate GTP. The short motif at 36-44 is the Effector region element; that stretch reads YYPTIENTF. Threonine 39 lines the Mg(2+) pocket. The GDP site is built by asparagine 120, aspartate 123, and alanine 152. Cysteine 184 carries S-farnesyl cysteine lipidation.

It belongs to the small GTPase superfamily. Rheb family. Post-translationally, farnesylation is important for efficiently activating mTORC1-mediated signaling.

The protein localises to the cell membrane. The catalysed reaction is GTP + H2O = GDP + phosphate + H(+). Its activity is regulated as follows. Alternates between an inactive form bound to GDP and an active form bound to GTP. In terms of biological role, small GTPase that acts as an allosteric activator of the canonical TOR pathway, an evolutionarily conserved central nutrient sensor that stimulates anabolic reactions and macromolecule biosynthesis to promote cellular biomass generation and growth. Plays a role in virulence. This Aspergillus fumigatus (strain ATCC MYA-4609 / CBS 101355 / FGSC A1100 / Af293) (Neosartorya fumigata) protein is Small monomeric GTPase RhbA.